Consider the following 1394-residue polypeptide: DNA-directed RNA polymerase subunit beta'' (1394 aa).

Zn(2+)-binding residues include cysteine 224, cysteine 295, cysteine 302, and cysteine 305.

This sequence belongs to the RNA polymerase beta' chain family. RpoC2 subfamily. As to quaternary structure, in plastids the minimal PEP RNA polymerase catalytic core is composed of four subunits: alpha, beta, beta', and beta''. When a (nuclear-encoded) sigma factor is associated with the core the holoenzyme is formed, which can initiate transcription. It depends on Zn(2+) as a cofactor.

It localises to the plastid. Its subcellular location is the chloroplast. It catalyses the reaction RNA(n) + a ribonucleoside 5'-triphosphate = RNA(n+1) + diphosphate. Its function is as follows. DNA-dependent RNA polymerase catalyzes the transcription of DNA into RNA using the four ribonucleoside triphosphates as substrates. The protein is DNA-directed RNA polymerase subunit beta'' of Vitis vinifera (Grape).